A 167-amino-acid chain; its full sequence is Small ribosomal subunit protein uS5 (167 aa).

The S5 DRBM domain occupies 12 to 75 (LQEKLIAVNR…EKARRNMVTV (64 aa)).

This sequence belongs to the universal ribosomal protein uS5 family. In terms of assembly, part of the 30S ribosomal subunit. Contacts proteins S4 and S8.

Its function is as follows. With S4 and S12 plays an important role in translational accuracy. Functionally, located at the back of the 30S subunit body where it stabilizes the conformation of the head with respect to the body. The protein is Small ribosomal subunit protein uS5 of Shewanella denitrificans (strain OS217 / ATCC BAA-1090 / DSM 15013).